The primary structure comprises 92 residues: Probable Fe(2+)-trafficking protein (92 aa).

This sequence belongs to the Fe(2+)-trafficking protein family.

Could be a mediator in iron transactions between iron acquisition and iron-requiring processes, such as synthesis and/or repair of Fe-S clusters in biosynthetic enzymes. This is Probable Fe(2+)-trafficking protein from Shewanella oneidensis (strain ATCC 700550 / JCM 31522 / CIP 106686 / LMG 19005 / NCIMB 14063 / MR-1).